Consider the following 349-residue polypeptide: Glycerol-3-phosphate dehydrogenase [NAD(+)], cytoplasmic (349 aa).

10–15 (GSGNWG) serves as a coordination point for NAD(+). K120 lines the substrate pocket. Residue A153 coordinates NAD(+). S154 is subject to Phosphoserine. K204 serves as the catalytic Proton acceptor. R269 contributes to the NAD(+) binding site. 269–270 (RN) serves as a coordination point for substrate. K289 bears the N6-succinyllysine mark. Residues K296 and Q298 each contribute to the NAD(+) site. A Phosphotyrosine modification is found at Y326.

Belongs to the NAD-dependent glycerol-3-phosphate dehydrogenase family. Homodimer.

Its subcellular location is the cytoplasm. It carries out the reaction sn-glycerol 3-phosphate + NAD(+) = dihydroxyacetone phosphate + NADH + H(+). Its function is as follows. Has glycerol-3-phosphate dehydrogenase activity. The chain is Glycerol-3-phosphate dehydrogenase [NAD(+)], cytoplasmic from Rattus norvegicus (Rat).